A 357-amino-acid chain; its full sequence is Sorbitol dehydrogenase (357 aa).

Ala-2 is subject to N-acetylalanine. Cys-45 serves as a coordination point for Zn(2+). Tyr-51 contacts substrate. Residues His-70 and Glu-71 each contribute to the Zn(2+) site. Glu-156 serves as a coordination point for substrate. NAD(+) is bound by residues Ile-184, Asp-204, and Arg-209. Ser-211 and Ser-225 each carry phosphoserine. Residues 273–275 and 297–299 contribute to the NAD(+) site; these read VGL and VFR. Substrate-binding residues include Arg-299 and Tyr-300.

It belongs to the zinc-containing alcohol dehydrogenase family. Homotetramer. Zn(2+) serves as cofactor.

Its subcellular location is the mitochondrion membrane. The protein localises to the cell projection. It is found in the cilium. The protein resides in the flagellum. The catalysed reaction is xylitol + NAD(+) = D-xylulose + NADH + H(+). The enzyme catalyses L-iditol + NAD(+) = keto-L-sorbose + NADH + H(+). It carries out the reaction keto-D-fructose + NADH + H(+) = D-sorbitol + NAD(+). Functionally, polyol dehydrogenase that catalyzes the reversible NAD(+)-dependent oxidation of various sugar alcohols. Is active with xylitol, L-iditol and D-sorbitol (D-glucitol) as substrates, leading to the C2-oxidized products D-xylulose, L-sorbose and D-fructose, respectively. Is a key enzyme in the polyol pathway that interconverts glucose and fructose via sorbitol, which constitutes an important alternate route for glucose metabolism. May play a role in sperm motility by using sorbitol as an alternative energy source for sperm motility. The polypeptide is Sorbitol dehydrogenase (SORD) (Macaca fascicularis (Crab-eating macaque)).